Here is a 1659-residue protein sequence, read N- to C-terminus: Daxx-like protein (1659 aa).

Disordered stretches follow at residues 1–25 and 265–336; these read MSAS…RRRL and QLQQ…VRSL. Residues 438 to 469 adopt a coiled-coil conformation; that stretch reads LGQLQQEQQKILGQLQQQKQQQQQQQKKILGQ. Composition is skewed to low complexity over residues 506–520, 528–542, and 600–625; these read SVGQ…QSQQ, KQQP…VGQF, and GQLQ…QQQQ. 7 disordered regions span residues 506–542, 600–645, 658–713, 872–894, 924–952, 1023–1060, and 1536–1555; these read SVGQ…VGQF, GQLQ…TLAG, SAGQ…MPQK, TLPF…HVQG, LPPT…VQQQ, VESP…QSRA, and FKIA…EDDD. Positions 626–635 are enriched in polar residues; that stretch reads KISAGQLQEH. 2 stretches are compositionally biased toward low complexity: residues 636–645 and 658–698; these read SQQQQKTLAG and SAGQ…QPQQ. Polar residues-rich tracts occupy residues 699–711 and 885–894; these read RTSA…QQMP and APMTSTHVQG. Residues 870 to 1659 are necessary for interaction with His3.3A and His3.3B; sequence ARTLPFRSSQ…DQIIISDEES (790 aa). Residues 924–937 show a composition bias toward low complexity; that stretch reads LPPTTSITPQLTPT. Acidic residues predominate over residues 1541 to 1555; it reads DGDDSEEESDSEDDD.

Interacts with p53 (via C-terminus). Interacts (via C-terminus) with His3.3A and His3.3B. Interacts with asf1. In terms of tissue distribution, ubiquitously expressed with higher levels in the head (at protein level). Expressed in the germ line, with prominent expression in primary spermatocytes and meiotic spermatocytes (at protein level). In ovaries, expressed in nurse cells and in the germinal vesicle of the ovarian follicle at stage 10 (at protein level).

The protein localises to the cytoplasm. It localises to the cytosol. The protein resides in the nucleus. It is found in the chromosome. Transcription regulator. Acts as a histone chaperone that facilitates deposition of histone H3.3. Has a role in chromatin remodeling together with asf1 and XNP. Has role in the transcriptional apoptotic response to oxidative and UV stress. The sequence is that of Daxx-like protein from Drosophila melanogaster (Fruit fly).